The following is a 300-amino-acid chain: MIDTKVNIAGVEFKNPVIAASGTFGFGREFLEYFPISKLGGLATKGLTLREREGNKGVRIHETIGGIMNSIGLQNPGIDAFIEEELPFLNSQDTVIIANVSGNTIDEYVISVEKLNQTDIDMIELNISCPNVKEGGISFGTKAEIASNVVTQVRKVCQKPLIVKLSPSAENIVEMAESCVEAGADALSLVNTFPALAIDISKKKAIFDNITAGLSGPCIKPIALRMVYEVSKAVDVPIIGIGGIMDYRDAIEYIMAGAWAVQVGTANFINPNACAEIIEGIEEYLQKEGISTLEEIRGII.

FMN contacts are provided by residues serine 21 and 45–46; that span reads KG. Substrate is bound by residues lysine 45 and 69-73; that span reads NSIGL. Asparagine 99 and asparagine 126 together coordinate FMN. Residue asparagine 126 participates in substrate binding. Cysteine 129 functions as the Nucleophile in the catalytic mechanism. Residues lysine 164 and valine 190 each coordinate FMN. A substrate-binding site is contributed by 191 to 192; sequence NT. FMN-binding positions include glycine 216, 242–243, and 264–265; these read GG and GT.

Belongs to the dihydroorotate dehydrogenase family. Type 1 subfamily. Heterotetramer of 2 PyrK and 2 PyrD type B subunits. FMN is required as a cofactor.

The protein localises to the cytoplasm. It carries out the reaction (S)-dihydroorotate + NAD(+) = orotate + NADH + H(+). It functions in the pathway pyrimidine metabolism; UMP biosynthesis via de novo pathway; orotate from (S)-dihydroorotate (NAD(+) route): step 1/1. In terms of biological role, catalyzes the conversion of dihydroorotate to orotate with NAD(+) as electron acceptor. The sequence is that of Dihydroorotate dehydrogenase B (NAD(+)), catalytic subunit (pyrD) from Petrotoga mobilis (strain DSM 10674 / SJ95).